The following is a 442-amino-acid chain: MTRNYLHKKILIFGMGLTGISCLNFFLSKGIYPKIMDTDKRPKHIEKIIKFKNICYHTGSVNYSWILQSNLIIVSPGITPSHPALKFATKKNIEIIGDIELFVQETKVPIIAITGSNGKSSVTKIVKEIIQKAGFTTYIGGNIGIPALNIVNKFAHFFILELSSFQLERTFSLKAYIATILNITPDHLNRYSSDIKEYEKAKQKIYKNSKICIINVDNPVTINRQAQLTKCISFGVHSGDYHLSHTYTNTWLCYKSLKLINTKKLKLSGRHNYINMLSALAIVHELKISFKISVRILKNFLGLPHRCQKVYKNNNITWINDSKSTNIASTKSAIQSINTKGKIRLILGGDKKSSNLNLLKPILKNNAIVIYCYGKDKKELFNLYPHKSKIFETLQEVMQHISVQVQPGDVVLLSPACSSLDQFSGFEERGNTFVKLIQELIH.

It belongs to the MurCDEF family.

It is found in the cytoplasm. The enzyme catalyses UDP-N-acetyl-alpha-D-muramoyl-L-alanine + D-glutamate + ATP = UDP-N-acetyl-alpha-D-muramoyl-L-alanyl-D-glutamate + ADP + phosphate + H(+). The protein operates within cell wall biogenesis; peptidoglycan biosynthesis. In terms of biological role, cell wall formation. Catalyzes the addition of glutamate to the nucleotide precursor UDP-N-acetylmuramoyl-L-alanine (UMA). This chain is UDP-N-acetylmuramoylalanine--D-glutamate ligase, found in Buchnera aphidicola subsp. Baizongia pistaciae (strain Bp).